A 37-amino-acid chain; its full sequence is Large ribosomal subunit protein bL36c (37 aa).

The protein belongs to the bacterial ribosomal protein bL36 family.

Its subcellular location is the plastid. It is found in the chloroplast. The protein is Large ribosomal subunit protein bL36c of Vitis vinifera (Grape).